The sequence spans 150 residues: Large ribosomal subunit protein bL9 (150 aa).

This sequence belongs to the bacterial ribosomal protein bL9 family.

In terms of biological role, binds to the 23S rRNA. The sequence is that of Large ribosomal subunit protein bL9 from Yersinia pseudotuberculosis serotype I (strain IP32953).